We begin with the raw amino-acid sequence, 587 residues long: 2-succinyl-5-enolpyruvyl-6-hydroxy-3-cyclohexene-1-carboxylate synthase (587 aa).

The protein belongs to the TPP enzyme family. MenD subfamily. Homodimer. Requires Mg(2+) as cofactor. Mn(2+) is required as a cofactor. Thiamine diphosphate serves as cofactor.

It catalyses the reaction isochorismate + 2-oxoglutarate + H(+) = 5-enolpyruvoyl-6-hydroxy-2-succinyl-cyclohex-3-ene-1-carboxylate + CO2. Its pathway is quinol/quinone metabolism; 1,4-dihydroxy-2-naphthoate biosynthesis; 1,4-dihydroxy-2-naphthoate from chorismate: step 2/7. It participates in cofactor biosynthesis; phylloquinone biosynthesis. Its function is as follows. Catalyzes the thiamine diphosphate-dependent decarboxylation of 2-oxoglutarate and the subsequent addition of the resulting succinic semialdehyde-thiamine pyrophosphate anion to isochorismate to yield 2-succinyl-5-enolpyruvyl-6-hydroxy-3-cyclohexene-1-carboxylate (SEPHCHC). The protein is 2-succinyl-5-enolpyruvyl-6-hydroxy-3-cyclohexene-1-carboxylate synthase of Prochlorococcus marinus (strain MIT 9301).